The sequence spans 275 residues: Ribosomal RNA small subunit methyltransferase A (275 aa).

The S-adenosyl-L-methionine site is built by Asn28, Leu30, Gly55, Glu77, Asp103, and Asn123.

This sequence belongs to the class I-like SAM-binding methyltransferase superfamily. rRNA adenine N(6)-methyltransferase family. RsmA subfamily.

It localises to the cytoplasm. The enzyme catalyses adenosine(1518)/adenosine(1519) in 16S rRNA + 4 S-adenosyl-L-methionine = N(6)-dimethyladenosine(1518)/N(6)-dimethyladenosine(1519) in 16S rRNA + 4 S-adenosyl-L-homocysteine + 4 H(+). Its function is as follows. Specifically dimethylates two adjacent adenosines (A1518 and A1519) in the loop of a conserved hairpin near the 3'-end of 16S rRNA in the 30S particle. May play a critical role in biogenesis of 30S subunits. The polypeptide is Ribosomal RNA small subunit methyltransferase A (Allorhizobium ampelinum (strain ATCC BAA-846 / DSM 112012 / S4) (Agrobacterium vitis (strain S4))).